A 218-amino-acid chain; its full sequence is Pyridoxine/pyridoxamine 5'-phosphate oxidase (218 aa).

Residues 14 to 17 and Lys-72 contribute to the substrate site; that span reads RREY. Residues 67–72, 82–83, Arg-88, Lys-89, and Gln-111 each bind FMN; these read RIVLLK and YT. Positions 129, 133, and 137 each coordinate substrate. FMN contacts are provided by residues 146–147 and Trp-191; that span reads QS. Position 197 to 199 (197 to 199) interacts with substrate; it reads RLH. FMN is bound at residue Arg-201.

This sequence belongs to the pyridoxamine 5'-phosphate oxidase family. Homodimer. FMN serves as cofactor.

The catalysed reaction is pyridoxamine 5'-phosphate + O2 + H2O = pyridoxal 5'-phosphate + H2O2 + NH4(+). The enzyme catalyses pyridoxine 5'-phosphate + O2 = pyridoxal 5'-phosphate + H2O2. It participates in cofactor metabolism; pyridoxal 5'-phosphate salvage; pyridoxal 5'-phosphate from pyridoxamine 5'-phosphate: step 1/1. Its pathway is cofactor metabolism; pyridoxal 5'-phosphate salvage; pyridoxal 5'-phosphate from pyridoxine 5'-phosphate: step 1/1. In terms of biological role, catalyzes the oxidation of either pyridoxine 5'-phosphate (PNP) or pyridoxamine 5'-phosphate (PMP) into pyridoxal 5'-phosphate (PLP). The polypeptide is Pyridoxine/pyridoxamine 5'-phosphate oxidase (Escherichia coli (strain SMS-3-5 / SECEC)).